The chain runs to 94 residues: MRLKPLGDRVVVKVIQSEEVTKGGVILPGTAKEKPQQGEVVAVGPGQYIDGKRVEPEVKVGDRVIFSKYAGTEVKLDGEEYLLLRESDILAIIE.

Belongs to the GroES chaperonin family. Heptamer of 7 subunits arranged in a ring. Interacts with the chaperonin GroEL.

It localises to the cytoplasm. Together with the chaperonin GroEL, plays an essential role in assisting protein folding. The GroEL-GroES system forms a nano-cage that allows encapsulation of the non-native substrate proteins and provides a physical environment optimized to promote and accelerate protein folding. GroES binds to the apical surface of the GroEL ring, thereby capping the opening of the GroEL channel. This Caldanaerobacter subterraneus subsp. tengcongensis (strain DSM 15242 / JCM 11007 / NBRC 100824 / MB4) (Thermoanaerobacter tengcongensis) protein is Co-chaperonin GroES.